A 344-amino-acid polypeptide reads, in one-letter code: Protein RecA (344 aa).

ATP is bound at residue 65–72 (GPESSGKT). A compositionally biased stretch (basic and acidic residues) spans 323–337 (ELREKFQPAEAPREA). The interval 323–344 (ELREKFQPAEAPREAGDDEDKE) is disordered.

Belongs to the RecA family.

The protein resides in the cytoplasm. Functionally, can catalyze the hydrolysis of ATP in the presence of single-stranded DNA, the ATP-dependent uptake of single-stranded DNA by duplex DNA, and the ATP-dependent hybridization of homologous single-stranded DNAs. It interacts with LexA causing its activation and leading to its autocatalytic cleavage. This is Protein RecA from Xanthomonas axonopodis pv. citri (strain 306).